The sequence spans 366 residues: MSGNTLGQNFRVTTFGESHGIALGAIIDGCPPGMELSEEDIQIELDRRKPGTSKHATARREDDKVQILSGVFEGKTTGTPIGLLIHNTDQRSKDYSKVAETFRPAHADYTYTQKYGIRDYRGGGRSSARETAMRVAAGAVAKKYLKERLGIEIKGYLSQLGPITVDNVSWPFDNDNEYFCPDKDKQEEIRQYMDNLLKQKDSVGAKISIIAKNVPVGLGEPVFDRLDADLAHALMSINAVKGVEIGDGFAVAAQRGTEHRDEMTPEGFVSNHAGGILGGISTGQDIVAHIALKPTSSIMTPGRSINTEGEAIEMVTKGRHDPCVGIRATPIAEAKVALVLMDHFMRNRAQNGDVVPPVMDLAHPEN.

Arg48 is a binding site for NADP(+). FMN-binding positions include 125-127 (RSS), 238-239 (NA), Gly278, 293-297 (KPTSS), and Arg319.

It belongs to the chorismate synthase family. In terms of assembly, homotetramer. The cofactor is FMNH2.

The catalysed reaction is 5-O-(1-carboxyvinyl)-3-phosphoshikimate = chorismate + phosphate. The protein operates within metabolic intermediate biosynthesis; chorismate biosynthesis; chorismate from D-erythrose 4-phosphate and phosphoenolpyruvate: step 7/7. In terms of biological role, catalyzes the anti-1,4-elimination of the C-3 phosphate and the C-6 proR hydrogen from 5-enolpyruvylshikimate-3-phosphate (EPSP) to yield chorismate, which is the branch point compound that serves as the starting substrate for the three terminal pathways of aromatic amino acid biosynthesis. This reaction introduces a second double bond into the aromatic ring system. This Hydrogenovibrio crunogenus (strain DSM 25203 / XCL-2) (Thiomicrospira crunogena) protein is Chorismate synthase.